The following is a 716-amino-acid chain: MAAKSKTPPPVDSLTRSQARVEHKRLALEIETHNERYYQQDAPTVSDATYDALQRRLEAIEARFPDLVTASSPTQTVGAAPARGFAKVQHAVPMLSLGNAFSDAEVAEFVERIRRFLKLGADDMPAIVAEPKIDGLSLSLRYENGDLVRAATRGDGFTGEDVTANVRTIADVPHKLNGHNIPTACELRGEVYMLKEDFLALNKKQQEAGDTVFANPRNSAAGSLRQKDVSITASRPLKFFAYAWGEMTDRPAETQNDMLEWLRDVGFIVNPLIQLCHSVDEVLAFYRRIGEQRATLGYDIDGVVYKVDRLDWQERLGFVSRSPRWAIAHKFAAEQAMTILRGIDIQVGRTGAMTPVARLEPVTVGGVVVQNATLHNEDYIRGLGNDGQPIRDGIDLRIGDTVVVQRAGDVIPQVVSVIIEKRPANAKRYEFPDRCPICGSHAVREEGEAVRRCTGALICPAQAVERLKHFVSRLAFDIDGLGEKQIQEFYDDGLVMHPVDIFTLQERDARAENKLRDRDGYGDVSVRNLFAAIDARRRIELNRLIFALGIRHVGEGNAKLLARHYGSIESFRSAMTEAAAAQTEAGNDSEAYADLTNIGGIGDIVADAVVEFFAEPRNVKALNDLLEEIEVLPVAQARSDSAVAGKTVVFTGSLEKFTRDEAKASAERVGAKTSSSVSKKTDLVVAGPGAGSKLKDAEKFGVKVISEDEWLKLIEG.

Residues 47-51 (DATYD), 96-97 (SL), and Glu130 contribute to the NAD(+) site. Residue Lys132 is the N6-AMP-lysine intermediate of the active site. Residues Arg153, Glu190, Lys306, and Lys330 each coordinate NAD(+). Zn(2+)-binding residues include Cys435, Cys438, Cys453, and Cys459. A BRCT domain is found at 638–716 (RSDSAVAGKT…EDEWLKLIEG (79 aa)).

The protein belongs to the NAD-dependent DNA ligase family. LigA subfamily. Mg(2+) is required as a cofactor. It depends on Mn(2+) as a cofactor.

The enzyme catalyses NAD(+) + (deoxyribonucleotide)n-3'-hydroxyl + 5'-phospho-(deoxyribonucleotide)m = (deoxyribonucleotide)n+m + AMP + beta-nicotinamide D-nucleotide.. Its function is as follows. DNA ligase that catalyzes the formation of phosphodiester linkages between 5'-phosphoryl and 3'-hydroxyl groups in double-stranded DNA using NAD as a coenzyme and as the energy source for the reaction. It is essential for DNA replication and repair of damaged DNA. This Nitrobacter winogradskyi (strain ATCC 25391 / DSM 10237 / CIP 104748 / NCIMB 11846 / Nb-255) protein is DNA ligase.